We begin with the raw amino-acid sequence, 517 residues long: L-amino-acid oxidase (517 aa).

An N-terminal signal peptide occupies residues 1–18 (MNVFFMFSLLFLAALESC). Cysteine 29 and cysteine 192 are joined by a disulfide. FAD is bound by residues 62-63 (MA), 82-83 (EA), arginine 90, and 106-109 (GPMR). Arginine 109 is a binding site for substrate. Asparagine 191 carries an N-linked (GlcNAc...) asparagine glycan. Valine 280 serves as a coordination point for FAD. Cysteine 350 and cysteine 431 form a disulfide bridge. Residue tyrosine 391 coordinates substrate. Residues glutamate 476 and 483–488 (GWIDST) contribute to the FAD site. 483 to 484 (GW) contributes to the substrate binding site.

This sequence belongs to the flavin monoamine oxidase family. FIG1 subfamily. In terms of assembly, homodimer; non-covalently linked. Requires FAD as cofactor. N-glycosylated. In terms of tissue distribution, expressed by the venom gland.

The protein resides in the secreted. It catalyses the reaction an L-alpha-amino acid + O2 + H2O = a 2-oxocarboxylate + H2O2 + NH4(+). Functionally, catalyzes an oxidative deamination of predominantly hydrophobic and aromatic L-amino acids, thus producing hydrogen peroxide that may contribute to the diverse toxic effects of this enzyme. Exhibits diverse biological activities, such as hemorrhage, hemolysis, edema, apoptosis of vascular endothelial cells or tumor cell lines, antibacterial and antiparasitic activities, as well as regulation of platelet aggregation. Its effect on platelets is controversial, since it either induces aggregation or inhibits agonist-induced aggregation. These different effects are probably due to different experimental conditions. The protein is L-amino-acid oxidase of Demansia vestigiata (Lesser black whip snake).